The primary structure comprises 964 residues: Translation initiation factor IF-2 (964 aa).

A disordered region spans residues 26–375; sequence AAGVSKRSPE…QNNQHAFQAP (350 aa). 7 stretches are compositionally biased toward basic and acidic residues: residues 49–60, 91–103, 118–154, 174–206, 225–236, 243–252, and 328–339; these read YLKRSHGAREDS, VRPD…EAPK, AKPE…KPEP, IAAR…ERRQ, PQREERRDDRRG, RGPRGNDNRG, and KGGERSWDDNKK. Positions 464-633 constitute a tr-type G domain; it reads PRSPVVTVMG…LLQAEVLELK (170 aa). The G1 stretch occupies residues 473–480; it reads GHVDHGKT. 473–480 is a binding site for GTP; that stretch reads GHVDHGKT. Residues 498-502 are G2; it reads GITQH. Residues 519 to 522 are G3; that stretch reads DTPG. GTP contacts are provided by residues 519–523 and 573–576; these read DTPGH and NKID. The tract at residues 573-576 is G4; the sequence is NKID. A G5 region spans residues 609-611; it reads SAK.

The protein belongs to the TRAFAC class translation factor GTPase superfamily. Classic translation factor GTPase family. IF-2 subfamily.

The protein localises to the cytoplasm. Its function is as follows. One of the essential components for the initiation of protein synthesis. Protects formylmethionyl-tRNA from spontaneous hydrolysis and promotes its binding to the 30S ribosomal subunits. Also involved in the hydrolysis of GTP during the formation of the 70S ribosomal complex. This Chromobacterium violaceum (strain ATCC 12472 / DSM 30191 / JCM 1249 / CCUG 213 / NBRC 12614 / NCIMB 9131 / NCTC 9757 / MK) protein is Translation initiation factor IF-2.